Reading from the N-terminus, the 90-residue chain is uncharacterized protein (90 aa).

A helical transmembrane segment spans residues 69–89; that stretch reads LLYIFLGAMIVIIFLVIKNQL.

Belongs to the IIV-6 466R family.

The protein localises to the membrane. This is an uncharacterized protein from Invertebrate iridescent virus 6 (IIV-6).